Reading from the N-terminus, the 651-residue chain is MSPVAKVSEFHREGNDWFCKTGLSSDITVVVDDVKFHLHKFPLVSKCGKLARMYEDSKSTDKQSLWTTVLEEFPGGADNFLIVARFCYGARVDITSKNLVSIHCAAEYLEMTNEYGEDNLISQVETFLHKHVLRNWKDCILALQSSSPVLKSAEKLQMIPKLMNAVSTMVCTDPSLFGWPMMMYGTLQSPGGSILWNGINTGARMRSSGSDWWYEDISYLSVDLFKRLIKTMETKGIRAESLAGAMMYYARKYLPGLGRWQSGTSDSSKSRRRVVSFNLAKASSPSSMPPLDQIALLETILSLLPEKRGRSFCKFLLGLLRVAFILGVDGNCVKKLEKRIGMQLELATLDNLLILNYSDSETLYNVDCVERIVRHFVSSLSSSSSQLPEFSPPSLDPVTSPSPAPLKKVANLVDSYMAEVASDVNLKPDKMRSLAAALPESSRPLYDGLYRAFDIYFKEHPWLSDRDKEQLCNIMDYQRLSIDACAHASHNDRLPLRVVLQVLFFEQMHLRTALAGGLNVANTETAHAVTIPGGRTGQEIVQRDGWVTVVRQNQVLKVDMQKMRSRVGELEEEFQSIKQEMKKRVSKSSSSMSSPRLVKLGCKFLLPRASDAKNDTVQNSVSSTPRSATADHTLPRSSRHSKHRKSFSFFG.

Positions Ser25–Ser96 constitute a BTB domain. Residues Asp211–His509 form the NPH3 domain. Residues Asp611–Gly651 form a disordered region. The span at Asp615–Ser627 shows a compositional bias: polar residues. The segment covering Ser637 to Gly651 has biased composition (basic residues).

This sequence belongs to the NPH3 family.

It functions in the pathway protein modification; protein ubiquitination. May act as a substrate-specific adapter of an E3 ubiquitin-protein ligase complex (CUL3-RBX1-BTB) which mediates the ubiquitination and subsequent proteasomal degradation of target proteins. The chain is BTB/POZ domain-containing protein At3g44820 from Arabidopsis thaliana (Mouse-ear cress).